Consider the following 841-residue polypeptide: Outer membrane usher protein MyfC (841 aa).

Positions 1 to 26 (MFFSLKNSVAKLIAFWAICLVLPVWA) are cleaved as a signal peptide. An intrachain disulfide couples Cys817 to Cys840.

It belongs to the fimbrial export usher family.

It localises to the cell outer membrane. In terms of biological role, involved in the export and assembly of the MyfA fimbrial subunit. This Yersinia enterocolitica protein is Outer membrane usher protein MyfC (myfC).